The sequence spans 466 residues: Keratin, type II cytoskeletal 7 (466 aa).

An N-acetylserine modification is found at serine 2. 2 positions are modified to phosphoserine: serine 2 and serine 7. The segment at 2–91 is head; sequence SLHFGSQVFS…DPSIQQVRQE (90 aa). An O-linked (GlcNAc) serine glycan is attached at serine 12. A Dimethylated arginine; alternate modification is found at arginine 20. The residue at position 20 (arginine 20) is an Omega-N-methylarginine; alternate. 3 positions are modified to phosphoserine: serine 54, serine 72, and serine 84. Residues 91–127 form a coil 1A region; the sequence is EEREQIKTLNNKFASFIDKVRFLEQQNKLLETKWALL. The 313-residue stretch at 92-404 folds into the IF rod domain; the sequence is EREQIKTLNN…KLLEGEESRL (313 aa). At threonine 98 the chain carries Phosphothreonine. The segment at 128 to 145 is linker 1; it reads QEQKSAKSNRLPGIFEAQ. Residue lysine 131 forms a Glycyl lysine isopeptide (Lys-Gly) (interchain with G-Cter in SUMO2) linkage. The segment at 146 to 237 is coil 1B; the sequence is IAGLRKQLEA…TLYEQELKEL (92 aa). The residue at position 180 (lysine 180) is an N6-acetyllysine. Positions 238 to 261 are linker 12; the sequence is QSEVSDTSVVLSMDNNRSLDLDSI. Phosphoserine is present on serine 255. Positions 262–400 are coil 2; it reads IAEVKAQYEE…ATYRKLLEGE (139 aa). Glycyl lysine isopeptide (Lys-Gly) (interchain with G-Cter in SUMO2) cross-links involve residues lysine 266 and lysine 287. Threonine 290 carries the post-translational modification Phosphothreonine. Residues lysine 297 and lysine 332 each participate in a glycyl lysine isopeptide (Lys-Gly) (interchain with G-Cter in SUMO2) cross-link. The segment at 401 to 466 is tail; that stretch reads ESRLTGDGVG…TSATSRSPRK (66 aa).

Belongs to the intermediate filament family. In terms of assembly, heterotetramer of two type I and two type II keratins. Interacts with eukaryotic translation initiator factor 3 (eIF3) subunit EIF3S10. Interacts with GPER1. Post-translationally, arg-20 is dimethylated, probably to asymmetric dimethylarginine.

Blocks interferon-dependent interphase and stimulates DNA synthesis in cells. The protein is Keratin, type II cytoskeletal 7 of Bos taurus (Bovine).